The sequence spans 519 residues: MSPSHAKLATVLLFDVATASADVGGTPSRLTKVARIADLLRRAAPNAALVAIVVSWLSGELRQRQIGVGWAALRSRPPAAAHPTLTVVAVDAAFAEIGAVAGKGAQARRAALLNALFAAATETEQTFLLRLLGGELRQGALAGIMADAVARAAGIPAAAVQRAAMLGGDLPAVAAAALSGEASALDAFTLRVGRPVAPMLAQTAAGVAQAIERHGGQAIFEAKLDGARVQIHRAGDQVTVYTRSLDDVTARLPEVVTATLALPVEALIADGEAIALRPDNSPQRFQVTASRFGRSLDVAAAVAAQPLSVFIFDILHCDGIDLLDAPTTDRLAALDALVPPAQRVDRLLTADPDAAGRFLEATLAAGHEGVMAKAPGAPYQAGRRGAGWLKVKPVHTLDLVVLAVEWGSGRRRGKLSNIHLGARDPATGEFVMVGKTFKGMTDAMLDWQTARFTELAVGGTDGYVVRVRPEQVVEVAVDGVQKSSRYPGGLALRFARVLRYRDDKGPAEADTIDAVRALY.

E221 contributes to the ATP binding site. The active-site N6-AMP-lysine intermediate is the K223. R228, R243, E272, F312, R384, and K390 together coordinate ATP.

This sequence belongs to the ATP-dependent DNA ligase family. The cofactor is Mg(2+).

The catalysed reaction is ATP + (deoxyribonucleotide)n-3'-hydroxyl + 5'-phospho-(deoxyribonucleotide)m = (deoxyribonucleotide)n+m + AMP + diphosphate.. Its function is as follows. DNA ligase that seals nicks in double-stranded DNA during DNA replication, DNA recombination and DNA repair. The protein is Probable DNA ligase of Mycolicibacterium paratuberculosis (strain ATCC BAA-968 / K-10) (Mycobacterium paratuberculosis).